Consider the following 194-residue polypeptide: Putative manganese efflux pump MntP (194 aa).

The next 6 membrane-spanning stretches (helical) occupy residues 3 to 23 (PFSIVLIGFAMSTDAFAAAIG), 37 to 57 (LRAGLIFGCIEAITPVIGWLL), 69 to 89 (DHWIAFVLLGALGTHMIVAGL), 110 to 132 (LGLATTGFATSIDAMAVGVSLAF), 147 to 167 (CTFSMVTAGVMLGRALGNLIG), and 172 to 192 (MLGGLILVIVGSVILYEHLSG).

Belongs to the MntP (TC 9.B.29) family.

Its subcellular location is the cell inner membrane. In terms of biological role, probably functions as a manganese efflux pump. The polypeptide is Putative manganese efflux pump MntP (Xanthomonas euvesicatoria pv. vesicatoria (strain 85-10) (Xanthomonas campestris pv. vesicatoria)).